The chain runs to 473 residues: Serine palmitoyltransferase 1 (473 aa).

Residues 1 to 15 (MATATEQWVLVEMVQ) lie on the Lumenal side of the membrane. Positions 1-66 (MATATEQWVL…KEELIEEWQP (66 aa)) are interaction with SPTLC2. A helical membrane pass occupies residues 16-36 (ALYEAPAYHLILEGILILWII). Residues 37 to 473 (RLLFSKTYKL…IKEVAQAVLL (437 aa)) lie on the Cytoplasmic side of the membrane. Tyrosine 164 carries the phosphotyrosine; by ABL modification.

It belongs to the class-II pyridoxal-phosphate-dependent aminotransferase family. As to quaternary structure, component of the serine palmitoyltransferase (SPT) complex, which is also composed of SPTLC2 or SPTLC3 and SPTSSA or SPTSSB. The heterodimer consisting of SPTLC1 and SPTLC2/SPTLC3 forms the catalytic core of the enzyme, while SPTSSA or SPTSSB subunits determine substrate specificity. SPT also interacts with ORMDL proteins, especially ORMDL3, which negatively regulate SPT activity in the presence of ceramides. Forms dimers of heterodimers with SPTLC2. Interacts with RTN4 (isoform B). Pyridoxal 5'-phosphate is required as a cofactor. In terms of processing, phosphorylation at Tyr-164 inhibits activity and promotes cell survival. Widely expressed. Not detected in small intestine.

Its subcellular location is the endoplasmic reticulum membrane. The enzyme catalyses L-serine + hexadecanoyl-CoA + H(+) = 3-oxosphinganine + CO2 + CoA. It carries out the reaction octadecanoyl-CoA + L-serine + H(+) = 3-oxoeicosasphinganine + CO2 + CoA. The catalysed reaction is tetradecanoyl-CoA + L-serine + H(+) = 3-oxohexadecasphinganine + CO2 + CoA. It catalyses the reaction dodecanoyl-CoA + L-serine + H(+) = 3-oxotetradecasphinganine + CO2 + CoA. It functions in the pathway lipid metabolism; sphingolipid metabolism. Its activity is regulated as follows. SPT complex catalytic activity is negatively regulated by ORMDL proteins, including ORMDL3, in the presence of ceramides. This mechanism allows to maintain ceramide levels at sufficient concentrations for the production of complex sphingolipids, but which prevents the accumulation of ceramides to levels that trigger apoptosis. Component of the serine palmitoyltransferase multisubunit enzyme (SPT) that catalyzes the initial and rate-limiting step in sphingolipid biosynthesis by condensing L-serine and activated acyl-CoA (most commonly palmitoyl-CoA) to form long-chain bases. The SPT complex is also composed of SPTLC2 or SPTLC3 and SPTSSA or SPTSSB. Within this complex, the heterodimer with SPTLC2 or SPTLC3 forms the catalytic core. The composition of the serine palmitoyltransferase (SPT) complex determines the substrate preference. The SPTLC1-SPTLC2-SPTSSA complex shows a strong preference for C16-CoA substrate, while the SPTLC1-SPTLC3-SPTSSA isozyme uses both C14-CoA and C16-CoA as substrates, with a slight preference for C14-CoA. The SPTLC1-SPTLC2-SPTSSB complex shows a strong preference for C18-CoA substrate, while the SPTLC1-SPTLC3-SPTSSB isozyme displays an ability to use a broader range of acyl-CoAs, without apparent preference. Required for adipocyte cell viability and metabolic homeostasis. This Homo sapiens (Human) protein is Serine palmitoyltransferase 1 (SPTLC1).